The chain runs to 199 residues: Glycerol-3-phosphate acyltransferase (199 aa).

Transmembrane regions (helical) follow at residues 4–24, 51–71, 77–97, 111–131, and 152–172; these read LVSV…FLMG, WAAL…AYLG, EWGF…PVWL, VMLL…ALAV, and LFLL…AVVI.

It belongs to the PlsY family. In terms of assembly, probably interacts with PlsX.

Its subcellular location is the cell membrane. It catalyses the reaction an acyl phosphate + sn-glycerol 3-phosphate = a 1-acyl-sn-glycero-3-phosphate + phosphate. The protein operates within lipid metabolism; phospholipid metabolism. In terms of biological role, catalyzes the transfer of an acyl group from acyl-phosphate (acyl-PO(4)) to glycerol-3-phosphate (G3P) to form lysophosphatidic acid (LPA). This enzyme utilizes acyl-phosphate as fatty acyl donor, but not acyl-CoA or acyl-ACP. This chain is Glycerol-3-phosphate acyltransferase, found in Symbiobacterium thermophilum (strain DSM 24528 / JCM 14929 / IAM 14863 / T).